Reading from the N-terminus, the 74-residue chain is Consomatin Gh1 (74 aa).

Residues 1-22 form the signal peptide; it reads MQTACWVMVMMMVWITAPLSEG. Positions 23–57 are excised as a propeptide; sequence GKLNDVIRGLVPDDVTPQLILRSLFFHRPSDSVVR. Cysteine 65 and cysteine 70 are oxidised to a cystine. Tryptophan 67 carries the D-tryptophan modification. Proline 71, proline 72, and proline 74 each carry 4-hydroxyproline.

Belongs to the conotoxin C superfamily. Consomatin family. As to expression, expressed by the venom duct.

The protein resides in the secreted. Functionally, moderately activates human somatostatin receptors (SSTR) with a preferential activation of SSTR1 and SSTR4. In vivo, does not cause behavioral changes in mice within a few minutes of intracranial injection, but causes a progressive loss of movement thereafter. Four to five hours after injection, mice recover, even with the highest dose tested. Shows antinociception and antihyperalgesia activities in two mouse models of acute pain, most probably by acting outside the central nervous system. The polypeptide is Consomatin Gh1 (Conus grahami (Cone snail)).